The sequence spans 277 residues: 3-methyl-2-oxobutanoate hydroxymethyltransferase (277 aa).

Residues D43 and D82 each contribute to the Mg(2+) site. Residues 43–44, D82, and K112 each bind 3-methyl-2-oxobutanoate; that span reads DS. E114 is a binding site for Mg(2+). The active-site Proton acceptor is the E181.

Belongs to the PanB family. Homodecamer; pentamer of dimers. The cofactor is Mg(2+).

It is found in the cytoplasm. The enzyme catalyses 3-methyl-2-oxobutanoate + (6R)-5,10-methylene-5,6,7,8-tetrahydrofolate + H2O = 2-dehydropantoate + (6S)-5,6,7,8-tetrahydrofolate. It participates in cofactor biosynthesis; (R)-pantothenate biosynthesis; (R)-pantoate from 3-methyl-2-oxobutanoate: step 1/2. Functionally, catalyzes the reversible reaction in which hydroxymethyl group from 5,10-methylenetetrahydrofolate is transferred onto alpha-ketoisovalerate to form ketopantoate. This chain is 3-methyl-2-oxobutanoate hydroxymethyltransferase, found in Listeria monocytogenes serotype 4a (strain HCC23).